The primary structure comprises 551 residues: uncharacterized protein (551 aa).

Polar residues predominate over residues 1-11 (MRRVSLPNQLN). 2 disordered regions span residues 1–22 (MRRV…TRGE) and 523–551 (CDPT…QAFH). Residues 12–22 (ETRRRSPTRGE) are compositionally biased toward basic and acidic residues. Low complexity predominate over residues 537-551 (QQPQQQQQQQQQAFH).

The protein to Synechocystis PCC 6803 sll0335 and to M.tuberculosis Rv2567.

This is an uncharacterized protein from Mycobacterium bovis (strain ATCC BAA-935 / AF2122/97).